The chain runs to 251 residues: MADQPQETTDFGFRTVARDEKQAMVADVFHSVAAKYDVMNDLMSFGIHRIWKRFTIDCSGVRRGQRVLDLAGGTGDLAAKFSRMVGEQGQVVLADINDSMLKMGREKLRDRGIIGNVNYVQANAEALPFPDNYFDCITISFGLRNVTDKDKALRSMFRVLKPGGRLLVLEFSKPLLAPLSKAYDAYSFHVLPKIGELVVKDPESYRYLAESIRMHPDQETLKGMMGAAGFDNVTYFNLTGGIVALHRGFKF.

S-adenosyl-L-methionine is bound by residues T74, D95, 123–124, and S140; that span reads NA.

Belongs to the class I-like SAM-binding methyltransferase superfamily. MenG/UbiE family.

It carries out the reaction a 2-demethylmenaquinol + S-adenosyl-L-methionine = a menaquinol + S-adenosyl-L-homocysteine + H(+). The enzyme catalyses a 2-methoxy-6-(all-trans-polyprenyl)benzene-1,4-diol + S-adenosyl-L-methionine = a 5-methoxy-2-methyl-3-(all-trans-polyprenyl)benzene-1,4-diol + S-adenosyl-L-homocysteine + H(+). The protein operates within quinol/quinone metabolism; menaquinone biosynthesis; menaquinol from 1,4-dihydroxy-2-naphthoate: step 2/2. It participates in cofactor biosynthesis; ubiquinone biosynthesis. Its function is as follows. Methyltransferase required for the conversion of demethylmenaquinol (DMKH2) to menaquinol (MKH2) and the conversion of 2-polyprenyl-6-methoxy-1,4-benzoquinol (DDMQH2) to 2-polyprenyl-3-methyl-6-methoxy-1,4-benzoquinol (DMQH2). This chain is Ubiquinone/menaquinone biosynthesis C-methyltransferase UbiE, found in Serratia proteamaculans (strain 568).